The chain runs to 322 residues: NADH-cytochrome b5 reductase 2 (322 aa).

Residues 30-46 traverse the membrane as a helical segment; it reads LAPVYVAVGLAGLGVGL. In terms of domain architecture, FAD-binding FR-type spans 71–176; sequence QGWVNLKLSD…KGPLPKYPWE (106 aa). Position 179-214 (179-214) interacts with FAD; that stretch reads KHKHICLVAGGTGITPMYQLAREIFKNPEDKTKVTL.

This sequence belongs to the flavoprotein pyridine nucleotide cytochrome reductase family. FAD is required as a cofactor.

It localises to the mitochondrion outer membrane. It carries out the reaction 2 Fe(III)-[cytochrome b5] + NADH = 2 Fe(II)-[cytochrome b5] + NAD(+) + H(+). Functionally, may mediate the reduction of outer membrane cytochrome b5. The chain is NADH-cytochrome b5 reductase 2 (mcr1) from Emericella nidulans (strain FGSC A4 / ATCC 38163 / CBS 112.46 / NRRL 194 / M139) (Aspergillus nidulans).